Reading from the N-terminus, the 624-residue chain is Actin-related protein 8 (624 aa).

The residue at position 1 (M1) is an N-acetylmethionine. Basic and acidic residues predominate over residues 1–25; that stretch reads MTQAEKGDTENGKEKGGEKEKEQRG. A disordered region spans residues 1–29; sequence MTQAEKGDTENGKEKGGEKEKEQRGVKRP. Residues S55 and T56 each contribute to the ATP site. At S132 the chain carries Phosphoserine. 283 to 286 is an ATP binding site; sequence DVGD. S412 is subject to Phosphoserine. The disordered stretch occupies residues 430–462; it reads SKQEQSAKATADRKSASKPIGFEGDLRGQSSDL.

The protein belongs to the actin family. ARP8 subfamily. In terms of assembly, component of the chromatin remodeling INO80 complex; specifically part of a complex module associated with the DBINO domain of INO80. Exists as monomers and dimers, but the dimer is most probably the biologically relevant form required for stable interactions with histones that exploits the twofold symmetry of the nucleosome core.

The protein localises to the nucleus. It localises to the chromosome. Plays an important role in the functional organization of mitotic chromosomes. Exhibits low basal ATPase activity, and unable to polymerize. In terms of biological role, proposed core component of the chromatin remodeling INO80 complex which is involved in transcriptional regulation, DNA replication and probably DNA repair. Required for the recruitment of INO80 (and probably the INO80 complex) to sites of DNA damage Strongly prefer nucleosomes and H3-H4 tetramers over H2A-H2B dimers, suggesting it may act as a nucleosome recognition module within the complex. In Pongo abelii (Sumatran orangutan), this protein is Actin-related protein 8 (ACTR8).